The sequence spans 71 residues: Small ribosomal subunit protein bS21 (71 aa).

Basic residues predominate over residues 48 to 59 (EKASLAKRHAKR). The interval 48–71 (EKASLAKRHAKRNFRENARNTRLY) is disordered. Basic and acidic residues predominate over residues 60–71 (NFRENARNTRLY).

Belongs to the bacterial ribosomal protein bS21 family.

The chain is Small ribosomal subunit protein bS21 from Glaesserella parasuis serovar 5 (strain SH0165) (Haemophilus parasuis).